Consider the following 876-residue polypeptide: GRB2-associated and regulator of MAPK protein (876 aa).

Residues 9-318 (KDVKWSSASF…NLIKGEVWQD (310 aa)) are CABIT. The residue at position 451 (Tyr451) is a Phosphotyrosine. Disordered stretches follow at residues 460–569 (SVKR…TLSY) and 708–741 (DRML…LSEP). Positions 461–471 (VKRSGQPLTRS) are enriched in polar residues. The span at 532-549 (PPVPPRSSKPSSPTPSVP) shows a compositional bias: pro residues. A compositionally biased stretch (polar residues) spans 556–569 (VRQQTRSPSPTLSY). Residues 811 to 876 (LSVEEVSKSL…QFINGWRPKM (66 aa)) enclose the SAM domain.

The protein belongs to the GAREM family.

In terms of biological role, adapter protein that may provide a link between cell surface epidermal growth factor receptor and the MAPK/ERK signaling pathway. May promote cell proliferation. The sequence is that of GRB2-associated and regulator of MAPK protein (garem1) from Xenopus laevis (African clawed frog).